Consider the following 239-residue polypeptide: MKDDVLKRQAHTAIQKKLGYAFRDMSLLRRALTHRSHHAKHNERFEFVGDSILNYTVARMLFDAFPKLTEGELSRLRASLVNEGVLAEMAAEMNVGDGLYLGAGELKSGGFRRPSILADAMEAMFAAVSFDADFNTAEKVVRHLFAERVRRADFQNQAKDGKTALQEALQARRFALPKYRIEEQIGHANDSMFVISCDLGELGFVCRAKGTSRKAAEQEAAKEALKWLEEKLPLKKKKK.

The RNase III domain occupies 11 to 133 (HTAIQKKLGY…MFAAVSFDAD (123 aa)). Residue E46 coordinates Mg(2+). D50 is an active-site residue. Mg(2+)-binding residues include D119 and E122. The active site involves E122. Residues 160 to 230 (DGKTALQEAL…AKEALKWLEE (71 aa)) form the DRBM domain.

This sequence belongs to the ribonuclease III family. In terms of assembly, homodimer. It depends on Mg(2+) as a cofactor.

The protein resides in the cytoplasm. The catalysed reaction is Endonucleolytic cleavage to 5'-phosphomonoester.. Digests double-stranded RNA. Involved in the processing of primary rRNA transcript to yield the immediate precursors to the large and small rRNAs (23S and 16S). Processes some mRNAs, and tRNAs when they are encoded in the rRNA operon. Processes pre-crRNA and tracrRNA of type II CRISPR loci if present in the organism. The sequence is that of Ribonuclease 3 from Neisseria gonorrhoeae (strain NCCP11945).